The following is a 153-amino-acid chain: Ribonuclease H (153 aa).

One can recognise an RNase H type-1 domain in the interval 4–146 (NNEIVEIYTD…CDRLATEQIK (143 aa)). Aspartate 13, glutamate 51, aspartate 73, and aspartate 138 together coordinate Mg(2+).

It belongs to the RNase H family. Monomer. Mg(2+) serves as cofactor.

Its subcellular location is the cytoplasm. It catalyses the reaction Endonucleolytic cleavage to 5'-phosphomonoester.. Endonuclease that specifically degrades the RNA of RNA-DNA hybrids. This chain is Ribonuclease H, found in Caldanaerobacter subterraneus subsp. tengcongensis (strain DSM 15242 / JCM 11007 / NBRC 100824 / MB4) (Thermoanaerobacter tengcongensis).